The following is a 142-amino-acid chain: Large ribosomal subunit protein uL13 (142 aa).

The protein belongs to the universal ribosomal protein uL13 family. In terms of assembly, part of the 50S ribosomal subunit.

In terms of biological role, this protein is one of the early assembly proteins of the 50S ribosomal subunit, although it is not seen to bind rRNA by itself. It is important during the early stages of 50S assembly. In Syntrophus aciditrophicus (strain SB), this protein is Large ribosomal subunit protein uL13.